The sequence spans 476 residues: Glycogen synthase (476 aa).

Lys15 is an ADP-alpha-D-glucose binding site.

Belongs to the glycosyltransferase 1 family. Bacterial/plant glycogen synthase subfamily.

It carries out the reaction [(1-&gt;4)-alpha-D-glucosyl](n) + ADP-alpha-D-glucose = [(1-&gt;4)-alpha-D-glucosyl](n+1) + ADP + H(+). It participates in glycan biosynthesis; glycogen biosynthesis. In terms of biological role, synthesizes alpha-1,4-glucan chains using ADP-glucose. The chain is Glycogen synthase from Haemophilus influenzae (strain 86-028NP).